The sequence spans 220 residues: Metalloproteinase inhibitor 2 (220 aa).

Positions 1-26 (MGATARSLRLALGLLLLGTLPRGADA) are cleaved as a signal peptide. Cys-27 contributes to the Zn(2+) binding site. Involved in metalloproteinase-binding stretches follow at residues 27 to 30 (CSCS) and 95 to 96 (SA). Disulfide bonds link Cys-27-Cys-98, Cys-29-Cys-127, Cys-39-Cys-152, Cys-154-Cys-201, Cys-159-Cys-164, and Cys-172-Cys-193. In terms of domain architecture, NTR spans 27–152 (CSCSPVHPQQ…SLNHRYQMGC (126 aa)).

The protein belongs to the protease inhibitor I35 (TIMP) family. Interacts (via the C-terminal) with MMP2 (via the C-terminal PEX domain); the interaction inhibits the MMP2 activity. The activity of TIMP2 is dependent on the presence of disulfide bonds. As to expression, predominantly expressed in the lung in alveolar macrophages and epithelial cells. Also found in brain, kidney, intestine, spleen and heart.

The protein localises to the secreted. Functionally, complexes with metalloproteinases (such as collagenases) and irreversibly inactivates them by binding to their catalytic zinc cofactor. This chain is Metalloproteinase inhibitor 2 (TIMP2), found in Cavia porcellus (Guinea pig).